Reading from the N-terminus, the 246-residue chain is NAD-dependent protein deacylase (246 aa).

A Deacetylase sirtuin-type domain is found at 1–245 (MKEFITKHRD…ELIREILDNP (245 aa)). An NAD(+)-binding site is contributed by 20-39 (GAGISAESGIPTFRGSEGLW). Residues Y64 and R67 each contribute to the substrate site. 98–101 (QNVD) contributes to the NAD(+) binding site. Catalysis depends on H116, which acts as the Proton acceptor. 4 residues coordinate Zn(2+): C124, C127, C146, and C149. NAD(+) is bound by residues 186–188 (GTS), 212–214 (NPE), and T230.

The protein belongs to the sirtuin family. Class III subfamily. Requires Zn(2+) as cofactor.

The protein resides in the cytoplasm. The enzyme catalyses N(6)-acetyl-L-lysyl-[protein] + NAD(+) + H2O = 2''-O-acetyl-ADP-D-ribose + nicotinamide + L-lysyl-[protein]. It carries out the reaction N(6)-succinyl-L-lysyl-[protein] + NAD(+) + H2O = 2''-O-succinyl-ADP-D-ribose + nicotinamide + L-lysyl-[protein]. Its function is as follows. NAD-dependent lysine deacetylase and desuccinylase that specifically removes acetyl and succinyl groups on target proteins. Modulates the activities of several proteins which are inactive in their acylated form. In Leptospira interrogans serogroup Icterohaemorrhagiae serovar copenhageni (strain Fiocruz L1-130), this protein is NAD-dependent protein deacylase.